The primary structure comprises 904 residues: Protein translocase subunit SecA (904 aa).

Residues glutamine 87, glycine 105–threonine 109, and aspartate 512 contribute to the ATP site. The tract at residues leucine 851–glutamine 904 is disordered. Residues lysine 853 to glutamate 871 show a composition bias toward polar residues. 4 residues coordinate Zn(2+): cysteine 888, cysteine 890, cysteine 899, and histidine 900. Over residues lysine 894–glutamine 904 the composition is skewed to basic residues.

This sequence belongs to the SecA family. Monomer and homodimer. Part of the essential Sec protein translocation apparatus which comprises SecA, SecYEG and auxiliary proteins SecDF-YajC and YidC. It depends on Zn(2+) as a cofactor.

It localises to the cell inner membrane. Its subcellular location is the cytoplasm. It carries out the reaction ATP + H2O + cellular proteinSide 1 = ADP + phosphate + cellular proteinSide 2.. Functionally, part of the Sec protein translocase complex. Interacts with the SecYEG preprotein conducting channel. Has a central role in coupling the hydrolysis of ATP to the transfer of proteins into and across the cell membrane, serving both as a receptor for the preprotein-SecB complex and as an ATP-driven molecular motor driving the stepwise translocation of polypeptide chains across the membrane. This Yersinia enterocolitica serotype O:8 / biotype 1B (strain NCTC 13174 / 8081) protein is Protein translocase subunit SecA.